A 46-amino-acid polypeptide reads, in one-letter code: Large ribosomal subunit protein bL36B (46 aa).

This sequence belongs to the bacterial ribosomal protein bL36 family.

This Enterobacter sp. (strain 638) protein is Large ribosomal subunit protein bL36B.